Consider the following 173-residue polypeptide: Adenine phosphoribosyltransferase (173 aa).

This sequence belongs to the purine/pyrimidine phosphoribosyltransferase family. In terms of assembly, homodimer.

It is found in the cytoplasm. It catalyses the reaction AMP + diphosphate = 5-phospho-alpha-D-ribose 1-diphosphate + adenine. It participates in purine metabolism; AMP biosynthesis via salvage pathway; AMP from adenine: step 1/1. Catalyzes a salvage reaction resulting in the formation of AMP, that is energically less costly than de novo synthesis. The polypeptide is Adenine phosphoribosyltransferase (Solibacter usitatus (strain Ellin6076)).